The following is a 70-amino-acid chain: Protein SlyX homolog (70 aa).

Belongs to the SlyX family.

The protein is Protein SlyX homolog of Shewanella oneidensis (strain ATCC 700550 / JCM 31522 / CIP 106686 / LMG 19005 / NCIMB 14063 / MR-1).